The sequence spans 122 residues: Small ribosomal subunit protein uS13 (122 aa).

The disordered stretch occupies residues 98 to 122; sequence VRGQRTHTNARTRKGPAKAIAGKKK.

It belongs to the universal ribosomal protein uS13 family. In terms of assembly, part of the 30S ribosomal subunit. Forms a loose heterodimer with protein S19. Forms two bridges to the 50S subunit in the 70S ribosome.

Functionally, located at the top of the head of the 30S subunit, it contacts several helices of the 16S rRNA. In the 70S ribosome it contacts the 23S rRNA (bridge B1a) and protein L5 of the 50S subunit (bridge B1b), connecting the 2 subunits; these bridges are implicated in subunit movement. Contacts the tRNAs in the A and P-sites. The chain is Small ribosomal subunit protein uS13 from Roseobacter denitrificans (strain ATCC 33942 / OCh 114) (Erythrobacter sp. (strain OCh 114)).